Consider the following 321-residue polypeptide: Acetyl-coenzyme A carboxylase carboxyl transferase subunit alpha (321 aa).

Residues 39-293 form the CoA carboxyltransferase C-terminal domain; that stretch reads RLEVKSQALT…KRALAEALRQ (255 aa).

Belongs to the AccA family. In terms of assembly, acetyl-CoA carboxylase is a heterohexamer composed of biotin carboxyl carrier protein (AccB), biotin carboxylase (AccC) and two subunits each of ACCase subunit alpha (AccA) and ACCase subunit beta (AccD).

It is found in the cytoplasm. It catalyses the reaction N(6)-carboxybiotinyl-L-lysyl-[protein] + acetyl-CoA = N(6)-biotinyl-L-lysyl-[protein] + malonyl-CoA. Its pathway is lipid metabolism; malonyl-CoA biosynthesis; malonyl-CoA from acetyl-CoA: step 1/1. In terms of biological role, component of the acetyl coenzyme A carboxylase (ACC) complex. First, biotin carboxylase catalyzes the carboxylation of biotin on its carrier protein (BCCP) and then the CO(2) group is transferred by the carboxyltransferase to acetyl-CoA to form malonyl-CoA. This is Acetyl-coenzyme A carboxylase carboxyl transferase subunit alpha from Azoarcus sp. (strain BH72).